We begin with the raw amino-acid sequence, 454 residues long: Bifunctional protein GlmU (454 aa).

The segment at 1–226 (MSTTVIILAA…AFEVEGVNDR (226 aa)) is pyrophosphorylase. UDP-N-acetyl-alpha-D-glucosamine contacts are provided by residues 8 to 11 (LAAG), K22, Q73, 78 to 79 (GT), 100 to 102 (YGD), G137, E151, N166, and N224. Position 102 (D102) interacts with Mg(2+). Residue N224 coordinates Mg(2+). The linker stretch occupies residues 227–247 (LQLAALEREFQKQQAKELMQQ). The interval 248-454 (GVTFADPARF…NYQRPQKLKK (207 aa)) is N-acetyltransferase. UDP-N-acetyl-alpha-D-glucosamine contacts are provided by R330 and K348. The active-site Proton acceptor is H360. Positions 363 and 374 each coordinate UDP-N-acetyl-alpha-D-glucosamine. Residues A377, 383–384 (NY), S402, A420, and R437 each bind acetyl-CoA.

In the N-terminal section; belongs to the N-acetylglucosamine-1-phosphate uridyltransferase family. This sequence in the C-terminal section; belongs to the transferase hexapeptide repeat family. In terms of assembly, homotrimer. Mg(2+) is required as a cofactor.

It localises to the cytoplasm. The enzyme catalyses alpha-D-glucosamine 1-phosphate + acetyl-CoA = N-acetyl-alpha-D-glucosamine 1-phosphate + CoA + H(+). It carries out the reaction N-acetyl-alpha-D-glucosamine 1-phosphate + UTP + H(+) = UDP-N-acetyl-alpha-D-glucosamine + diphosphate. Its pathway is nucleotide-sugar biosynthesis; UDP-N-acetyl-alpha-D-glucosamine biosynthesis; N-acetyl-alpha-D-glucosamine 1-phosphate from alpha-D-glucosamine 6-phosphate (route II): step 2/2. It participates in nucleotide-sugar biosynthesis; UDP-N-acetyl-alpha-D-glucosamine biosynthesis; UDP-N-acetyl-alpha-D-glucosamine from N-acetyl-alpha-D-glucosamine 1-phosphate: step 1/1. It functions in the pathway bacterial outer membrane biogenesis; LPS lipid A biosynthesis. Functionally, catalyzes the last two sequential reactions in the de novo biosynthetic pathway for UDP-N-acetylglucosamine (UDP-GlcNAc). The C-terminal domain catalyzes the transfer of acetyl group from acetyl coenzyme A to glucosamine-1-phosphate (GlcN-1-P) to produce N-acetylglucosamine-1-phosphate (GlcNAc-1-P), which is converted into UDP-GlcNAc by the transfer of uridine 5-monophosphate (from uridine 5-triphosphate), a reaction catalyzed by the N-terminal domain. The polypeptide is Bifunctional protein GlmU (Acinetobacter baumannii (strain AYE)).